A 537-amino-acid polypeptide reads, in one-letter code: Putative cysteine ligase BshC (537 aa).

Belongs to the BshC family.

In terms of biological role, involved in bacillithiol (BSH) biosynthesis. May catalyze the last step of the pathway, the addition of cysteine to glucosamine malate (GlcN-Mal) to generate BSH. The sequence is that of Putative cysteine ligase BshC from Staphylococcus saprophyticus subsp. saprophyticus (strain ATCC 15305 / DSM 20229 / NCIMB 8711 / NCTC 7292 / S-41).